The chain runs to 213 residues: ATP synthase peripheral stalk subunit OSCP, mitochondrial (213 aa).

Residues 1 to 23 (MAAPAVSGLSRQVRCFSTSVVRP) constitute a mitochondrion transit peptide. Positions 5-23 (AVSGLSRQVRCFSTSVVRP) match the SIFI-degron motif. N6-acetyllysine is present on residues Lys-54, Lys-60, Lys-70, and Lys-73. Lys-90 is modified (N6-succinyllysine). Residues Lys-158 and Lys-162 each carry the N6-acetyllysine; alternate modification. An N6-succinyllysine; alternate mark is found at Lys-158 and Lys-162. 3 positions are modified to N6-acetyllysine: Lys-172, Lys-176, and Lys-192. An N6-succinyllysine modification is found at Lys-199.

Belongs to the ATPase delta chain family. As to quaternary structure, component of the ATP synthase complex composed at least of ATP5F1A/subunit alpha, ATP5F1B/subunit beta, ATP5MC1/subunit c (homooctomer), MT-ATP6/subunit a, MT-ATP8/subunit 8, ATP5ME/subunit e, ATP5MF/subunit f, ATP5MG/subunit g, ATP5MK/subunit k, ATP5MJ/subunit j, ATP5F1C/subunit gamma, ATP5F1D/subunit delta, ATP5F1E/subunit epsilon, ATP5PF/subunit F6, ATP5PB/subunit b, ATP5PD/subunit d, ATP5PO/subunit OSCP. ATP synthase complex consists of a soluble F(1) head domain (subunits alpha(3) and beta(3)) - the catalytic core - and a membrane F(0) domain - the membrane proton channel (subunits c, a, 8, e, f, g, k and j). These two domains are linked by a central stalk (subunits gamma, delta, and epsilon) rotating inside the F1 region and a stationary peripheral stalk (subunits F6, b, d, and OSCP). In terms of processing, acetylation at Lys-162 decreases ATP production. Deacetylated by SIRT3. In response to mitochondrial stress, the precursor protein is ubiquitinated by the SIFI complex in the cytoplasm before mitochondrial import, leading to its degradation. Within the SIFI complex, UBR4 initiates ubiquitin chain that are further elongated or branched by KCMF1.

The protein localises to the mitochondrion. The protein resides in the mitochondrion inner membrane. In terms of biological role, subunit OSCP, of the mitochondrial membrane ATP synthase complex (F(1)F(0) ATP synthase or Complex V) that produces ATP from ADP in the presence of a proton gradient across the membrane which is generated by electron transport complexes of the respiratory chain. ATP synthase complex consist of a soluble F(1) head domain - the catalytic core - and a membrane F(1) domain - the membrane proton channel. These two domains are linked by a central stalk rotating inside the F(1) region and a stationary peripheral stalk. During catalysis, ATP synthesis in the catalytic domain of F(1) is coupled via a rotary mechanism of the central stalk subunits to proton translocation. In vivo, can only synthesize ATP although its ATP hydrolase activity can be activated artificially in vitro. Part of the complex F(0) domain. Part of the complex F(0) domain and the peripheric stalk, which acts as a stator to hold the catalytic alpha(3)beta(3) subcomplex and subunit a/ATP6 static relative to the rotary elements. The protein is ATP synthase peripheral stalk subunit OSCP, mitochondrial of Homo sapiens (Human).